The primary structure comprises 590 residues: UvrABC system protein C (590 aa).

Positions 11 to 85 (ETPGVYLWKR…IKAHRPLYNV (75 aa)) constitute a GIY-YIG domain. Positions 194–229 (DGLLQELEAKMREAARRLEFERAAEIRDQMEALRAF) constitute a UVR domain.

It belongs to the UvrC family. In terms of assembly, interacts with UvrB in an incision complex.

It is found in the cytoplasm. The UvrABC repair system catalyzes the recognition and processing of DNA lesions. UvrC both incises the 5' and 3' sides of the lesion. The N-terminal half is responsible for the 3' incision and the C-terminal half is responsible for the 5' incision. The protein is UvrABC system protein C of Thermus thermophilus (strain ATCC 27634 / DSM 579 / HB8).